A 163-amino-acid polypeptide reads, in one-letter code: MRIEKCYFCSGPIYPGHGMMFVRNDCKVFRFCKSKCHKNFKKKRNPRKVRWTKAFRKAAGKELTVDNSFEFEKRRNEPVKYQRELWNKTIDAMKRVEEIKQRRQAKFIMNRLKKNKELQKVQDIREVKQNIHLIRAPLAGKGKQLEEKMVQQLQEDVDMEDAS.

Belongs to the eukaryotic ribosomal protein eL24 family. In terms of assembly, associated with nucleolar and cytoplasmic pre-60S particles. At the end of biogenesis it dissociates from cytoplasmic pre-60S particles and is likely to be exchanged for its ribosomal homolog, RPL24.

It localises to the nucleus. The protein localises to the nucleolus. In terms of biological role, involved in the biogenesis of the 60S ribosomal subunit. Ensures the docking of GTPBP4/NOG1 to pre-60S particles. This Rattus norvegicus (Rat) protein is Probable ribosome biogenesis protein RLP24 (Rsl24d1).